A 141-amino-acid chain; its full sequence is MAKKVEKLVKLQIPAGKATPAPPVGPALGQAGINIMGFTKEFNARTADQAGMIIPVVISVYEDKSFTFVTKTPPAAVLLKKAAGVEKGSGTPNKTKVATVTRAQVQEIAETKMPDLNAANIESAMRMIEGTARSMGFTVVD.

This sequence belongs to the universal ribosomal protein uL11 family. As to quaternary structure, part of the ribosomal stalk of the 50S ribosomal subunit. Interacts with L10 and the large rRNA to form the base of the stalk. L10 forms an elongated spine to which L12 dimers bind in a sequential fashion forming a multimeric L10(L12)X complex. One or more lysine residues are methylated.

Functionally, forms part of the ribosomal stalk which helps the ribosome interact with GTP-bound translation factors. In Streptococcus pneumoniae (strain Hungary19A-6), this protein is Large ribosomal subunit protein uL11.